A 723-amino-acid polypeptide reads, in one-letter code: Heme/hemopexin utilization protein C (723 aa).

An N-terminal signal peptide occupies residues 1–21 (MRFSKLSLAITTTLVTANALA). The TBDR plug domain occupies 36–147 (DPSRFAYTPE…LGGVVAMRTP (112 aa)). Residues 158 to 723 (KFGVKIRQGY…NAKISAVYSF (566 aa)) form the TBDR beta-barrel domain. Residues 706 to 723 (SLMEGTGRNAKISAVYSF) carry the TonB C-terminal box motif.

This sequence belongs to the TonB-dependent receptor family.

Its subcellular location is the cell outer membrane. Functionally, required for utilization of free heme at low concentrations. This chain is Heme/hemopexin utilization protein C (hxuC), found in Haemophilus influenzae (strain ATCC 51907 / DSM 11121 / KW20 / Rd).